Here is a 478-residue protein sequence, read N- to C-terminus: RNA-binding protein 42 (478 aa).

Residues 1-20 show a composition bias toward low complexity; it reads MASAMAGAGPAPGLPVAGGP. Residues 1-33 form a disordered region; sequence MASAMAGAGPAPGLPVAGGPVVPGPGVGIPGKS. Ala2 carries the N-acetylalanine modification. Ser133 carries the phosphoserine modification. Asymmetric dimethylarginine occurs at positions 151, 156, 166, and 179. Disordered stretches follow at residues 171–207 and 317–354; these read LSSA…MLPP and SLRP…PEKL. The span at 193–205 shows a compositional bias: pro residues; that stretch reads PPLPGPPGPPMML. Positions 234 to 478 are necessary for interaction with HNRNPK; sequence ELGLGLGLGL…QKEKKKLGLR (245 aa). Over residues 343 to 354 the composition is skewed to basic and acidic residues; the sequence is GEDKKKGKPEKL. Positions 379-457 constitute an RRM domain; the sequence is FRIFCGDLGN…RPIKLRKSMW (79 aa).

This sequence belongs to the RRM RBM42 family. Interacts with HNRNPK. Expressed in cell lines (at protein level). Expressed in heart, brain, spleen, lung, liver, skeletal muscle, kidney and testis.

It is found in the nucleus. Its subcellular location is the cytoplasm. Functionally, binds (via the RRM domain) to the 3'-untranslated region (UTR) of CDKN1A mRNA. The sequence is that of RNA-binding protein 42 (Rbm42) from Mus musculus (Mouse).